The primary structure comprises 218 residues: Pyridoxine/pyridoxamine 5'-phosphate oxidase (218 aa).

Residues 12–15 and Arg70 contribute to the substrate site; that span reads RLSY. FMN-binding positions include 65–70, 80–81, Lys87, and Gln109; these read RTVLLR and YT. Substrate-binding residues include Tyr127, Arg131, and Ser135. Residues 145–146 and Trp191 each bind FMN; that span reads QS. 197–199 serves as a coordination point for substrate; it reads RLH. Arg201 contacts FMN.

It belongs to the pyridoxamine 5'-phosphate oxidase family. Homodimer. Requires FMN as cofactor.

It catalyses the reaction pyridoxamine 5'-phosphate + O2 + H2O = pyridoxal 5'-phosphate + H2O2 + NH4(+). The enzyme catalyses pyridoxine 5'-phosphate + O2 = pyridoxal 5'-phosphate + H2O2. It participates in cofactor metabolism; pyridoxal 5'-phosphate salvage; pyridoxal 5'-phosphate from pyridoxamine 5'-phosphate: step 1/1. The protein operates within cofactor metabolism; pyridoxal 5'-phosphate salvage; pyridoxal 5'-phosphate from pyridoxine 5'-phosphate: step 1/1. In terms of biological role, catalyzes the oxidation of either pyridoxine 5'-phosphate (PNP) or pyridoxamine 5'-phosphate (PMP) into pyridoxal 5'-phosphate (PLP). The chain is Pyridoxine/pyridoxamine 5'-phosphate oxidase from Acinetobacter baumannii (strain SDF).